The chain runs to 249 residues: Proteasome activator complex subunit 1 (249 aa).

Positions 60–102 (PLDIPVPDPVKEKEKEERKKQQEKEEKDEKKKGDEDDKGPPCG) are disordered. The segment covering 68 to 98 (PVKEKEKEERKKQQEKEEKDEKKKGDEDDKG) has biased composition (basic and acidic residues).

Belongs to the PA28 family. As to quaternary structure, heterodimer of PSME1 and PSME2, which forms a hexameric ring. PSME1 can form homoheptamers.

Its function is as follows. Implicated in immunoproteasome assembly and required for efficient antigen processing. The PA28 activator complex enhances the generation of class I binding peptides by altering the cleavage pattern of the proteasome. The sequence is that of Proteasome activator complex subunit 1 (Psme1) from Rattus norvegicus (Rat).